The chain runs to 346 residues: MGVTELGKLIGKDIRREVKLENLAGKCIALDAYNSLYQFLASIRQPDGTPLMDRVGRITSHLSGLFYRTINLMEAGIKPVYVFDGKPPEFKLAEIEERRKVKEKAMEEVLKAIKEGRKEDVAKYMKRAVFLTSDMVEDAKKLLTYMGVPWVQAPSEGEAQAAHMAKRGHCWAVGSQDYDSLLFGSPRLVRNLAVSPRRKIGEEVIELSPEIIELDAVLKSLRLKNREQLIDLAILLGTDYNPDGVPGVGPQKALKLVWEFGGLEKMLETVLRGVYFPVDPLEIKKFFLNPPVTDEYSTDIKKPDEQKLIDFLVREHDFSEDRVLKAVERLKRAQTKYKISSLDSFF.

Residues 1–102 (MGVTELGKLI…AEIEERRKVK (102 aa)) are N-domain. Mg(2+)-binding residues include Asp-31, Asp-84, Glu-156, Glu-158, Asp-177, Asp-179, and Asp-239. The segment at 120-261 (DVAKYMKRAV…KALKLVWEFG (142 aa)) is I-domain.

It belongs to the XPG/RAD2 endonuclease family. FEN1 subfamily. In terms of assembly, interacts with PCNA. PCNA stimulates the nuclease activity without altering cleavage specificity. Mg(2+) serves as cofactor.

In terms of biological role, structure-specific nuclease with 5'-flap endonuclease and 5'-3' exonuclease activities involved in DNA replication and repair. During DNA replication, cleaves the 5'-overhanging flap structure that is generated by displacement synthesis when DNA polymerase encounters the 5'-end of a downstream Okazaki fragment. Binds the unpaired 3'-DNA end and kinks the DNA to facilitate 5' cleavage specificity. Cleaves one nucleotide into the double-stranded DNA from the junction in flap DNA, leaving a nick for ligation. Also involved in the base excision repair (BER) pathway. Acts as a genome stabilization factor that prevents flaps from equilibrating into structures that lead to duplications and deletions. Also possesses 5'-3' exonuclease activity on nicked or gapped double-stranded DNA. In Pyrobaculum islandicum (strain DSM 4184 / JCM 9189 / GEO3), this protein is Flap endonuclease 1.